A 27-amino-acid polypeptide reads, in one-letter code: Delta-actitoxin-Avd2a (27 aa).

Intrachain disulfides connect Cys3–Cys17, Cys4–Cys11, and Cys6–Cys22.

This sequence belongs to the sea anemone short toxin (type III) family.

Its subcellular location is the secreted. It localises to the nematocyst. Specific arthropod (crab and insect) toxin that inhibits inactivation of voltage-gated sodium channels. It competes well with the site-3 toxin LqhalphaIT (from the scorpion L.quinquestriatus (AC P17728)) on binding to cockroach neuronal membranes (Ki=21.4 nM), and inhibits the inactivation of D.melanogaster channel (DmNav1), but not that of mammalian Navs expressed in Xenopus oocytes. Its activity is synergically enhanced by ligands of receptor site-4 (Bj-xtrIT (AC P56637)). Its ability to inhibit the channel mutant DmNav1[D1701R] only decreases 5-fold, whereas the inhibition activity is completely lost by LqhalphaIT and Av2 when tested on DmNav1[D1701R]. The sequence is that of Delta-actitoxin-Avd2a from Anemonia sulcata (Mediterranean snakelocks sea anemone).